We begin with the raw amino-acid sequence, 104 residues long: UPF0213 protein ORF82 (104 aa).

The GIY-YIG domain occupies 7–83; sequence KVWCVYIVRR…KRKRGKYFKL (77 aa).

Belongs to the UPF0213 family.

The polypeptide is UPF0213 protein ORF82 (Orgyia pseudotsugata (Douglas-fir tussock moth)).